The following is a 240-amino-acid chain: Putative RING finger protein ORF96 (240 aa).

Residues 9–44 form an RING-type 1 zinc finger; sequence CVVCMEEKPLVVFEPCMHHNCCESCSGHVSNCPYCR. Residues 150–202 form an RING-type 2; degenerate zinc finger; sequence CVICKKEIKEEVGKTYMHACCTATICKPCAKAILKAMVEKEITENLPFCPYCF.

This Ostreid herpesvirus 1 (isolate France) (OsHV-1) protein is Putative RING finger protein ORF96.